A 350-amino-acid chain; its full sequence is Small ribosomal subunit biogenesis GTPase RsgA (350 aa).

Positions 1 to 30 are disordered; sequence MSKRKLTQNQQRRIQSNNAKTLHRHQHRHK. Residues 7–20 show a composition bias toward polar residues; that stretch reads TQNQQRRIQSNNAK. Over residues 21–30 the composition is skewed to basic residues; the sequence is TLHRHQHRHK. In terms of domain architecture, CP-type G spans 106 to 274; it reads HNQIVRPDYY…LIDSPGIREF (169 aa). GTP-binding positions include 162 to 165 and 216 to 224; these read NKAD and GQSGVGKSS. Cysteine 298, cysteine 303, histidine 305, and cysteine 311 together coordinate Zn(2+).

Belongs to the TRAFAC class YlqF/YawG GTPase family. RsgA subfamily. Monomer. Associates with 30S ribosomal subunit, binds 16S rRNA. Zn(2+) is required as a cofactor.

It is found in the cytoplasm. One of several proteins that assist in the late maturation steps of the functional core of the 30S ribosomal subunit. Helps release RbfA from mature subunits. May play a role in the assembly of ribosomal proteins into the subunit. Circularly permuted GTPase that catalyzes slow GTP hydrolysis, GTPase activity is stimulated by the 30S ribosomal subunit. In Histophilus somni (strain 129Pt) (Haemophilus somnus), this protein is Small ribosomal subunit biogenesis GTPase RsgA.